The chain runs to 281 residues: MLDSPTLDLLDSLRRTMAEKSFLVVTGAGISTASGIPDYRDKDGVRRGAQPMMYQEFVGNPAARQRYWARAMLGWPRISASQANAAHRALAALQAENLIKGLITQNVDALHTQAGSQDVIELHGSLHRVLCLDCQQRSDRTAIQEQMLAHNLYLADVHATQAPDGDTLLDPAYEAGFKVPECPHCQGKRLKPDVVFFGENVASHTAARATLSVEQAEGLLVVGTSLMAWSAFRLCKAMAEQGKPVIAINHGKTRADELLRMKIEAPCEQVLPWLAEQLITR.

The region spanning 1–281 is the Deacetylase sirtuin-type domain; it reads MLDSPTLDLL…PWLAEQLITR (281 aa). Residues 27–47 and 105–108 each bind NAD(+); these read GAGI…GVRR and QNVD. Residue histidine 123 is the Proton acceptor of the active site. Positions 131, 134, 182, and 185 each coordinate Zn(2+). NAD(+) is bound by residues 223–225, 249–251, and cysteine 267; these read GTS and NHG.

It belongs to the sirtuin family. Class II subfamily. It depends on Zn(2+) as a cofactor.

It is found in the cytoplasm. It catalyses the reaction N(6)-acetyl-L-lysyl-[protein] + NAD(+) + H2O = 2''-O-acetyl-ADP-D-ribose + nicotinamide + L-lysyl-[protein]. Its function is as follows. NAD-dependent protein deacetylase which modulates the activities of several enzymes which are inactive in their acetylated form. This chain is NAD-dependent protein deacetylase 3, found in Pseudomonas syringae pv. tomato (strain ATCC BAA-871 / DC3000).